The primary structure comprises 188 residues: Adrenodoxin, mitochondrial (188 aa).

Residues 1–64 (MAAAPGARLL…RPLSVSARAR (64 aa)) constitute a mitochondrion transit peptide. Ser-67 carries the post-translational modification Phosphoserine. The 107-residue stretch at 69 to 175 (DKVTVHFKNR…NMTVRVPEAV (107 aa)) folds into the 2Fe-2S ferredoxin-type domain. At Lys-70 the chain carries N6-acetyllysine; alternate. Position 70 is an N6-succinyllysine; alternate (Lys-70). 4 residues coordinate [2Fe-2S] cluster: Cys-110, Cys-116, Cys-119, and Cys-156. Lys-162 is subject to N6-succinyllysine. Ser-181 carries the phosphoserine modification.

It belongs to the adrenodoxin/putidaredoxin family. Interacts with CYP11A1. It depends on [2Fe-2S] cluster as a cofactor. In terms of tissue distribution, found in all tissues, most abundant in adrenals, ovaries and testes.

The protein localises to the mitochondrion matrix. Its function is as follows. Essential for the synthesis of various steroid hormones. Participates in the reduction of mitochondrial cytochrome P450 for steroidogenesis. Transfers electrons from adrenodoxin reductase to CYP11A1, a cytochrome P450 that catalyzes cholesterol side-chain cleavage. Does not form a ternary complex with adrenodoxin reductase and CYP11A1 but shuttles between the two enzymes to transfer electrons. The sequence is that of Adrenodoxin, mitochondrial (Fdx1) from Rattus norvegicus (Rat).